Reading from the N-terminus, the 740-residue chain is Inhibitor of nuclear factor kappa-B kinase subunit alpha (740 aa).

In terms of domain architecture, Protein kinase spans 15–302 (WEMRERLGTG…LTLKQPRCFV (288 aa)). ATP contacts are provided by residues 21-29 (LGTGGFGNV) and K44. The residue at position 23 (T23) is a Phosphothreonine; by PKB/AKT1. D144 (proton acceptor) is an active-site residue. S176 carries the phosphoserine; by MAP3K14 modification. A Phosphoserine modification is found at S180. Residues 455–476 (LLRYNTNLTKMKNTLISASQQL) form a leucine-zipper region. An NEMO-binding region spans residues 733–738 (LDWSWL).

Belongs to the protein kinase superfamily. Ser/Thr protein kinase family. I-kappa-B kinase subfamily. Component of the I-kappa-B-kinase (IKK) core complex consisting of CHUK, IKBKB and IKBKG; probably four alpha/CHUK-beta/IKBKB dimers are associated with four gamma/IKBKG subunits. The IKK core complex seems to associate with regulatory or adapter proteins to form a IKK-signalosome holo-complex. The IKK complex associates with TERF2IP/RAP1, leading to promote IKK-mediated phosphorylation of RELA/p65. Part of a complex composed of NCOA2, NCOA3, CHUK/IKKA, IKBKB, IKBKG and CREBBP. Part of a 70-90 kDa complex at least consisting of CHUK/IKKA, IKBKB, NFKBIA, RELA, ELP1 and MAP3K14. Directly interacts with TRPC4AP. May interact with TRAF2. Interacts with NALP2. May interact with MAVS/IPS1. Interacts with ARRB1 and ARRB2. Interacts with NLRC5; prevents CHUK phosphorylation and kinase activity. Interacts with PIAS1; this interaction induces PIAS1 phosphorylation. Interacts with ZNF268 isoform 2; the interaction is further increased in a TNF-alpha-dependent manner. Interacts with IFIT5; the interaction synergizes the recruitment of IKK to MAP3K7 and enhances IKK phosphorylation. Interacts with LRRC14. Directly interacts with DDX3X after the physiological activation of the TLR7 and TLR8 pathways; this interaction enhances CHUK autophosphorylation. Ubiquitinated by TRIM56 via 'Lys-63'-linked ubiquitination, promoting activation of CHUK/IKKA. Post-translationally, phosphorylated by MAP3K14/NIK, AKT and to a lesser extent by MEKK1, and dephosphorylated by PP2A. Autophosphorylated.

The protein localises to the cytoplasm. The protein resides in the nucleus. It catalyses the reaction L-seryl-[I-kappa-B protein] + ATP = O-phospho-L-seryl-[I-kappa-B protein] + ADP + H(+). Its activity is regulated as follows. Activated when phosphorylated and inactivated when dephosphorylated. In terms of biological role, serine kinase that plays an essential role in the NF-kappa-B signaling pathway which is activated by multiple stimuli such as inflammatory cytokines, bacterial or viral products, DNA damages or other cellular stresses. Acts as a part of the canonical IKK complex in the conventional pathway of NF-kappa-B activation and phosphorylates inhibitors of NF-kappa-B on serine residues. These modifications allow polyubiquitination of the inhibitors and subsequent degradation by the proteasome. In turn, free NF-kappa-B is translocated into the nucleus and activates the transcription of hundreds of genes involved in immune response, growth control, or protection against apoptosis. Negatively regulates the pathway by phosphorylating the scaffold protein TAXBP1 and thus promoting the assembly of the A20/TNFAIP3 ubiquitin-editing complex (composed of A20/TNFAIP3, TAX1BP1, and the E3 ligases ITCH and RNF11). Therefore, CHUK plays a key role in the negative feedback of NF-kappa-B canonical signaling to limit inflammatory gene activation. As part of the non-canonical pathway of NF-kappa-B activation, the MAP3K14-activated CHUK/IKKA homodimer phosphorylates NFKB2/p100 associated with RelB, inducing its proteolytic processing to NFKB2/p52 and the formation of NF-kappa-B RelB-p52 complexes. In turn, these complexes regulate genes encoding molecules involved in B-cell survival and lymphoid organogenesis. Also participates in the negative feedback of the non-canonical NF-kappa-B signaling pathway by phosphorylating and destabilizing MAP3K14/NIK. Within the nucleus, phosphorylates CREBBP and consequently increases both its transcriptional and histone acetyltransferase activities. Modulates chromatin accessibility at NF-kappa-B-responsive promoters by phosphorylating histones H3 at 'Ser-10' that are subsequently acetylated at 'Lys-14' by CREBBP. Additionally, phosphorylates the CREBBP-interacting protein NCOA3. Also phosphorylates FOXO3 and may regulate this pro-apoptotic transcription factor. Interacts with SASH1. Phosphorylates RIPK1 at 'Ser-25' which represses its kinase activity and consequently prevents TNF-mediated RIPK1-dependent cell death. Phosphorylates AMBRA1 following mitophagy induction, promoting AMBRA1 interaction with ATG8 family proteins and its mitophagic activity. The sequence is that of Inhibitor of nuclear factor kappa-B kinase subunit alpha (CHUK) from Bos taurus (Bovine).